A 58-amino-acid polypeptide reads, in one-letter code: UPF0391 membrane protein Sfri_4000 (58 aa).

Helical transmembrane passes span 6-26 and 27-47; these read LMFL…IAGA and AAGI…ISLV.

The protein belongs to the UPF0391 family.

It is found in the cell membrane. This is UPF0391 membrane protein Sfri_4000 from Shewanella frigidimarina (strain NCIMB 400).